The chain runs to 129 residues: MNWLDELKWDSQGLMPAIAQEQGSNDVLMLAWMNREALQKTAELGRAVYFSRSRNKLWFKGEESGHVQIVHEIRIDCDQDVILLKVTQTGHTPGIACHTGRHSCFYRVYENGEWKVTDPVLKDPQTIYK.

Residue Asp76 participates in Mg(2+) binding. Cys77 lines the Zn(2+) pocket. Asp78 and Asp80 together coordinate Mg(2+). Residues Cys97 and Cys104 each contribute to the Zn(2+) site.

Belongs to the PRA-CH family. Homodimer. It depends on Mg(2+) as a cofactor. The cofactor is Zn(2+).

The protein localises to the cytoplasm. It catalyses the reaction 1-(5-phospho-beta-D-ribosyl)-5'-AMP + H2O = 1-(5-phospho-beta-D-ribosyl)-5-[(5-phospho-beta-D-ribosylamino)methylideneamino]imidazole-4-carboxamide. It participates in amino-acid biosynthesis; L-histidine biosynthesis; L-histidine from 5-phospho-alpha-D-ribose 1-diphosphate: step 3/9. Catalyzes the hydrolysis of the adenine ring of phosphoribosyl-AMP. The protein is Phosphoribosyl-AMP cyclohydrolase of Albidiferax ferrireducens (strain ATCC BAA-621 / DSM 15236 / T118) (Rhodoferax ferrireducens).